We begin with the raw amino-acid sequence, 359 residues long: Aminomethyltransferase (359 aa).

Belongs to the GcvT family. The glycine cleavage system is composed of four proteins: P, T, L and H.

It carries out the reaction N(6)-[(R)-S(8)-aminomethyldihydrolipoyl]-L-lysyl-[protein] + (6S)-5,6,7,8-tetrahydrofolate = N(6)-[(R)-dihydrolipoyl]-L-lysyl-[protein] + (6R)-5,10-methylene-5,6,7,8-tetrahydrofolate + NH4(+). Functionally, the glycine cleavage system catalyzes the degradation of glycine. In Synechococcus sp. (strain RCC307), this protein is Aminomethyltransferase.